We begin with the raw amino-acid sequence, 150 residues long: UPF0178 protein Sbal_1771 (150 aa).

It belongs to the UPF0178 family.

The polypeptide is UPF0178 protein Sbal_1771 (Shewanella baltica (strain OS155 / ATCC BAA-1091)).